We begin with the raw amino-acid sequence, 286 residues long: MNILTGTQRTSREKKKVKKLNLLVLLGVFCGVGAVGDADVKVSDALSQSILSEPRIRVLLLSESTTALVEAKGAFSVFGDGELLRVSSQGQRCAAHALYGGIRWGENYPNVECLKIEPLDGSASLFVNGIQYKGSVYIHKTERNCLFVVNELAIEDYLKSVLSVKYLKELDKEALSACVILERTALYERLLAGNANSFWHVNAQEDRYGGYGVTSQFYGVEEAVDWTSRLVLDNPEGLVFNADYLLQSNVDRLAIEGYNARQILEKFYKDADLVVIESWEDNNRGV.

It belongs to the chlamydial CPn_0389/CT_041/TC_0311 family.

This is an uncharacterized protein from Chlamydia muridarum (strain MoPn / Nigg).